Consider the following 496-residue polypeptide: ATP synthase subunit beta, chloroplastic (496 aa).

Residue 170 to 177 (GGAGVGKT) participates in ATP binding.

It belongs to the ATPase alpha/beta chains family. As to quaternary structure, F-type ATPases have 2 components, CF(1) - the catalytic core - and CF(0) - the membrane proton channel. CF(1) has five subunits: alpha(3), beta(3), gamma(1), delta(1), epsilon(1). CF(0) has four main subunits: a(1), b(1), b'(1) and c(9-12).

It localises to the plastid. Its subcellular location is the chloroplast thylakoid membrane. It catalyses the reaction ATP + H2O + 4 H(+)(in) = ADP + phosphate + 5 H(+)(out). Its function is as follows. Produces ATP from ADP in the presence of a proton gradient across the membrane. The catalytic sites are hosted primarily by the beta subunits. The sequence is that of ATP synthase subunit beta, chloroplastic from Dioscorea elephantipes (Elephant's foot yam).